Reading from the N-terminus, the 397-residue chain is Golgi-associated RAB2 interactor protein 2 (397 aa).

Disordered regions lie at residues 1–24 and 342–397; these read MKKS…PDSK and QTTL…KLLN. Basic and acidic residues-rich tracts occupy residues 10–24, 353–369, and 376–397; these read TRID…PDSK, EKSK…RTMD, and KAEE…KLLN.

Belongs to the GARIN family. Interacts with CALM1.

Its subcellular location is the cell projection. The protein resides in the cilium. The protein localises to the flagellum. Functionally, seems to play a role in sperm motility. The protein is Golgi-associated RAB2 interactor protein 2 (GARIN2) of Bos taurus (Bovine).